Reading from the N-terminus, the 134-residue chain is MCPSSFRLILSVILIAFLFVGLCEAHRHINVDIINDIGPNVQLGLHCKSKGKDLGPQSLAPHQHWGFTASLNVWETTLFFCHFVWENQSRWFDILKEKRDTIVCKYHPCVWSIRPSGPCRLTDHEKCYPCNADI.

Residues 1–25 (MCPSSFRLILSVILIAFLFVGLCEA) form the signal peptide. An N-linked (GlcNAc...) asparagine glycan is attached at Asn87.

The protein belongs to the plant self-incompatibility (S1) protein family.

The protein resides in the secreted. This is S-protein homolog 18 from Arabidopsis thaliana (Mouse-ear cress).